A 231-amino-acid chain; its full sequence is Regulatory protein VanR (231 aa).

Residues 4-117 (KILIVDDEHE…ELIARVKAQL (114 aa)) form the Response regulatory domain. Position 53 is a 4-aspartylphosphate (aspartate 53). A DNA-binding region (ompR/PhoB-type) is located at residues 131 to 231 (ENVIVHSGLV…VWGVGYKIEK (101 aa)).

Monomer. Post-translationally, phosphorylated by VanS. Dephosphorylated by VanS. Can be phosphorylated nonenzymatically by acetyl-phosphate.

The protein resides in the cytoplasm. Member of the two-component regulatory system VanS/VanR. Binds to the promoter regions of target genes, including vanH and vanR; phosphorylation of VanR increases binding affinity to the vanH and vanR promoters significantly. DNA binding may be inhibited by the cognate sensor protein, VanS. Activates the transcription of vanH, vanA and vanX in response to vancomycin which results in vancomycin resistance. Involved in conferring vancomycin resistance. The polypeptide is Regulatory protein VanR (vanR) (Enterococcus faecium (Streptococcus faecium)).